The following is a 188-amino-acid chain: Accessory gene regulator protein B (188 aa).

4 helical membrane-spanning segments follow: residues 49-69 (VALLFHTFLYTLITHLTYFFV), 82-102 (LLCHIQNLVLFVALPWSIVHF), 104-124 (VSWTFMIFVAFIAFIIIICYA), and 163-183 (YMQLIALGMCIEAITLLPIFF).

This sequence belongs to the AgrB family.

It is found in the cell membrane. Essential for the production of a quorum sensing system signal molecule, the autoinducing peptide (AIP). This quorum sensing system is responsible for the regulation of the expression of virulence factor genes. Involved in the proteolytic processing of AgrD, the precursor of AIP. The protein is Accessory gene regulator protein B of Staphylococcus lugdunensis.